The sequence spans 199 residues: Dephospho-CoA kinase (199 aa).

One can recognise a DPCK domain in the interval 11 to 199 (RIGLTGGIAS…DLHDQLDALL (189 aa)). 19 to 24 (ASGKSS) lines the ATP pocket.

Belongs to the CoaE family.

It is found in the cytoplasm. The catalysed reaction is 3'-dephospho-CoA + ATP = ADP + CoA + H(+). The protein operates within cofactor biosynthesis; coenzyme A biosynthesis; CoA from (R)-pantothenate: step 5/5. In terms of biological role, catalyzes the phosphorylation of the 3'-hydroxyl group of dephosphocoenzyme A to form coenzyme A. The chain is Dephospho-CoA kinase from Synechococcus sp. (strain CC9902).